A 340-amino-acid chain; its full sequence is Major histocompatibility complex class I-related gene protein (340 aa).

An N-terminal signal peptide occupies residues 1–22 (MGELMAFLLPLIIVLMVKHSNS). The segment at 23–109 (RTHSLRYFRL…KRLQRHYNHS (87 aa)) is alpha-1. Positions 23–201 (RTHSLRYFRL…EYGKDTLQRT (179 aa)) are antigen-binding cleft. At 23–302 (RTHSLRYFRL…QESEAIPLVM (280 aa)) the chain is on the extracellular side. Positions 29 and 31 each coordinate 8-(9H-purin-6-yl)-2-oxa-8-azabicyclo[3.3.1]nona-3,6-diene-4,6-dicarbaldehyde. 5-(2-oxoethylideneamino)-6-(D-ribitylamino)uracil is bound by residues Arg31, Ser46, and Lys65. The 5-(2-oxopropylideneamino)-6-(D-ribitylamino)uracil site is built by Arg31, Ser46, and Lys65. 7-hydroxy-6-methyl-8-(1-D-ribityl)lumazine is bound by residues Arg31, Ser46, and Lys65. The 8-(9H-purin-6-yl)-2-oxa-8-azabicyclo[3.3.1]nona-3,6-diene-4,6-dicarbaldehyde site is built by Lys65 and His80. Residue Lys65 participates in 2-amino-4-oxopteridine-6-carbaldehyde binding. Residue Lys65 participates in pyridoxal binding. Asn107 carries N-linked (GlcNAc...) asparagine glycosylation. Residues 110–201 (GSHTYQRMIG…EYGKDTLQRT (92 aa)) form an alpha-2 region. Arg116 serves as a coordination point for 8-(9H-purin-6-yl)-2-oxa-8-azabicyclo[3.3.1]nona-3,6-diene-4,6-dicarbaldehyde. Residues Arg116, Tyr174, and Gln175 each contribute to the 5-(2-oxoethylideneamino)-6-(D-ribitylamino)uracil site. 5-(2-oxopropylideneamino)-6-(D-ribitylamino)uracil contacts are provided by Arg116, Tyr174, and Gln175. 7-hydroxy-6-methyl-8-(1-D-ribityl)lumazine-binding residues include Arg116, Tyr174, and Gln175. Intrachain disulfides connect Cys120–Cys183 and Cys222–Cys278. The alpha-3 stretch occupies residues 202–293 (EPPLVRVNRK…GVHMVLQVPQ (92 aa)). An Ig-like C1-type domain is found at 203–282 (PPLVRVNRKE…SNLYSCHVEH (80 aa)). Positions 294-302 (ESEAIPLVM) are connecting peptide. The chain crosses the membrane as a helical span at residues 303 to 323 (KAVSGSIVFVIVLTGVGVLVW). Topologically, residues 324–340 (RRRPREQNGAVYLPTPD) are cytoplasmic.

The protein belongs to the MHC class I family. In terms of assembly, heterotrimer that consists of MR1, B2M and metabolite antigen. Major classes of metabolite ligands presented by MR1 include riboflavin-related antigens, pyrimidines and ribityl lumazines, nucleobase adducts and folate derivatives. Forms reversible covalent Schiff base complexes with microbial pyrimidine-based metabolite, which serves as a molecular switch triggering complete folding, stable association with B2M and translocation of the ternary complex from endoplasmic reticulum to the plasma membrane. Alternatively, forms non-Schiff base complexes with ribityl lumazines. On antigen-presenting cells, the ternary complex interacts with TCR on MR1-restricted T cells. Interacts with TAPBP and TAPBPL chaperones in the endoplasmic reticulum. TAPBP associated or not with MHC class I peptide loading complex binds ligand-free MR1 or MR1-B2M complex, providing for stable MR1 pools ready for metabolite antigen processing. TAPBPL interacts with MR1 in a ligand-independent way; this interaction may stabilize MR1 pool and facilitate ligand loading and dissociation. Structurally, MR1-B2M heterodimer adopts a topology similar to classical MHC class I molecules, with alpha-1 and alpha-2 domains of MR1 forming the antigen-binding cleft composed of two alpha-helices resting on a floor of 7-stranded anti-parallel beta-pleated sheet. MR1-B2M heterodimer (via alpha-helices) interacts with TCR (via CDR domains). In terms of processing, N-glycosylated.

The protein resides in the cell membrane. Its subcellular location is the endoplasmic reticulum membrane. The protein localises to the golgi apparatus membrane. It is found in the early endosome membrane. It localises to the late endosome membrane. In terms of biological role, antigen-presenting molecule specialized in displaying microbial pyrimidine-based metabolites to alpha-beta T cell receptors (TCR) on innate-type mucosal-associated invariant T (MAIT) cells. In complex with B2M preferentially presents riboflavin-derived metabolites to semi-invariant TCRs on MAIT cells, guiding immune surveillance of the microbial metabolome at mucosal epithelial barriers. Signature pyrimidine-based microbial antigens are generated via non-enzymatic condensation of metabolite intermediates of the riboflavin pathway with by-products arising from other metabolic pathways such as glycolysis. Typical potent antigenic metabolites are 5-(2-oxoethylideneamino)-6-D-ribitylaminouracil (5-OE-RU) and 5-(2-oxopropylideneamino)-6-D-ribitylaminouracil (5-OP-RU), products of condensation of 5-amino-6-D-ribityaminouracil (5-A-RU) with glyoxal or methylglyoxal by-products, respectively. May present microbial antigens to various MAIT cell subsets, providing for unique recognition of diverse microbes, including pathogens that do not synthesize riboflavin. Upon antigen recognition, elicits rapid innate-type MAIT cell activation to eliminate pathogenic microbes by directly killing infected cells. During T cell development, drives thymic selection and post-thymic terminal differentiation of MAIT cells in a process dependent on commensal microflora. Acts as an immune sensor of cancer cell metabolome. May present a tumor-specific or -associated metabolite essential for cancer cell survival to a pan-cancer TCR on a non-MAIT CD8-positive T cell clone, triggering T cell-mediated killing of a wide range of cancer cell types. May present tumor-enriched pyridoxal and pyridoxal 5'-phosphate antigens, enabling preferential recognition of cancer cells. Presents nucleobase carbonyl adducts generated during oxidative stress. Captures M3Ade, a nucleobase adduct composed of one adenine modified by a malondialdehyde trimer, for recognition by MR1-restricted T cell clones expressing a polyclonal TCR repertoire. In Pongo pygmaeus (Bornean orangutan), this protein is Major histocompatibility complex class I-related gene protein.